The primary structure comprises 476 residues: Methylenetetrahydrofolate--tRNA-(uracil-5-)-methyltransferase TrmFO (476 aa).

13 to 18 (GGGLAG) contacts FAD. The tract at residues 425 to 446 (PPLESPPTHGADGKKLRGPDKT) is disordered. The span at 435 to 446 (ADGKKLRGPDKT) shows a compositional bias: basic and acidic residues.

This sequence belongs to the MnmG family. TrmFO subfamily. Requires FAD as cofactor.

The protein resides in the cytoplasm. The catalysed reaction is uridine(54) in tRNA + (6R)-5,10-methylene-5,6,7,8-tetrahydrofolate + NADH + H(+) = 5-methyluridine(54) in tRNA + (6S)-5,6,7,8-tetrahydrofolate + NAD(+). The enzyme catalyses uridine(54) in tRNA + (6R)-5,10-methylene-5,6,7,8-tetrahydrofolate + NADPH + H(+) = 5-methyluridine(54) in tRNA + (6S)-5,6,7,8-tetrahydrofolate + NADP(+). Its function is as follows. Catalyzes the folate-dependent formation of 5-methyl-uridine at position 54 (M-5-U54) in all tRNAs. This is Methylenetetrahydrofolate--tRNA-(uracil-5-)-methyltransferase TrmFO from Rhodopseudomonas palustris (strain BisB18).